Reading from the N-terminus, the 615-residue chain is 1-deoxy-D-xylulose-5-phosphate synthase (615 aa).

Thiamine diphosphate contacts are provided by residues histidine 76 and glycine 117–serine 119. Aspartate 148 provides a ligand contact to Mg(2+). Residues glycine 149–alanine 150, asparagine 177, tyrosine 284, and glutamate 365 each bind thiamine diphosphate. Mg(2+) is bound at residue asparagine 177.

The protein belongs to the transketolase family. DXPS subfamily. In terms of assembly, homodimer. The cofactor is Mg(2+). Thiamine diphosphate is required as a cofactor.

The catalysed reaction is D-glyceraldehyde 3-phosphate + pyruvate + H(+) = 1-deoxy-D-xylulose 5-phosphate + CO2. It functions in the pathway metabolic intermediate biosynthesis; 1-deoxy-D-xylulose 5-phosphate biosynthesis; 1-deoxy-D-xylulose 5-phosphate from D-glyceraldehyde 3-phosphate and pyruvate: step 1/1. In terms of biological role, catalyzes the acyloin condensation reaction between C atoms 2 and 3 of pyruvate and glyceraldehyde 3-phosphate to yield 1-deoxy-D-xylulose-5-phosphate (DXP). This Francisella tularensis subsp. holarctica (strain FTNF002-00 / FTA) protein is 1-deoxy-D-xylulose-5-phosphate synthase.